The following is a 68-amino-acid chain: Large ribosomal subunit protein bL32 (68 aa).

Positions 1–21 (MAVQQNKVSKSRRNNRRAHDS) are disordered.

The protein belongs to the bacterial ribosomal protein bL32 family.

This is Large ribosomal subunit protein bL32 from Roseobacter denitrificans (strain ATCC 33942 / OCh 114) (Erythrobacter sp. (strain OCh 114)).